Consider the following 388-residue polypeptide: Envelope protein F13 homolog (388 aa).

A lipid anchor (N-myristoyl glycine; by host) is attached at G2. Positions 310–337 constitute a PLD phosphodiesterase domain; that stretch reads GDAINNTKLLVVDDEYVHVSNADIDGTH.

The protein resides in the virion membrane. It localises to the host endoplasmic reticulum membrane. Functionally, envelope protein associated with the inner side of the enveloped virion (EV) membrane. This is Envelope protein F13 homolog (P43K) from Molluscum contagiosum virus subtype 2 (MOCV).